A 284-amino-acid polypeptide reads, in one-letter code: Ubiquinone biosynthesis protein COQ4, mitochondrial (284 aa).

Residues His-165, Asp-166, His-169, and Glu-181 each contribute to the Zn(2+) site.

It belongs to the COQ4 family. Component of a multi-subunit COQ enzyme complex, composed of at least COQ3, COQ4, COQ5, COQ6, COQ7 and COQ9. Zn(2+) is required as a cofactor.

It localises to the mitochondrion inner membrane. It carries out the reaction a 4-hydroxy-3-methoxy-5-(all-trans-polyprenyl)benzoate + H(+) = a 2-methoxy-6-(all-trans-polyprenyl)phenol + CO2. It participates in cofactor biosynthesis; ubiquinone biosynthesis. Its function is as follows. Lyase that catalyzes the C1-decarboxylation of 4-hydroxy-3-methoxy-5-(all-trans-polyprenyl)benzoic acid into 2-methoxy-6-(all-trans-polyprenyl)phenol during ubiquinone biosynthesis. The protein is Ubiquinone biosynthesis protein COQ4, mitochondrial of Blastomyces gilchristii (strain SLH14081) (Blastomyces dermatitidis).